The chain runs to 127 residues: Oleate-induced peroxisomal protein POX18 (127 aa).

Residues 14 to 119 form the SCP2 domain; sequence FKELHEGLAD…KATAIESVFK (106 aa). The segment at 33 to 41 is hydrophobic; sequence AVNAVIVIT. The interval 43 to 52 is hydrophilic; sequence KNKEGKEQSW.

Monomer.

The protein localises to the peroxisome. Its pathway is lipid metabolism; fatty acid metabolism. In terms of biological role, is involved in beta-oxidation of long-chain fatty acids. Its exact function is unknown, but possesses a nonspecific lipid-transfer activity, despite the absence of a cysteine residue thought to be essential for the activity of its mammalian counterparts. The polypeptide is Oleate-induced peroxisomal protein POX18 (POX18) (Candida maltosa (Yeast)).